Here is a 68-residue protein sequence, read N- to C-terminus: uncharacterized protein (68 aa).

Residues 24–44 (AHICKCIAMFFVVAGVVLMFF) traverse the membrane as a helical segment.

Its subcellular location is the endoplasmic reticulum. The protein resides in the membrane. This is an uncharacterized protein from Saccharomyces cerevisiae (strain ATCC 204508 / S288c) (Baker's yeast).